Consider the following 45-residue polypeptide: Large ribosomal subunit protein bL34 (45 aa).

A compositionally biased stretch (basic and acidic residues) spans 1 to 10 (MTKRTLEGTN). The tract at residues 1-27 (MTKRTLEGTNRKRKRTSGFRARMRSAT) is disordered. Basic residues predominate over residues 11–23 (RKRKRTSGFRARM).

It belongs to the bacterial ribosomal protein bL34 family.

The protein is Large ribosomal subunit protein bL34 of Synechococcus elongatus (strain ATCC 33912 / PCC 7942 / FACHB-805) (Anacystis nidulans R2).